Reading from the N-terminus, the 547-residue chain is MEDEDKTAECQHSKPPTGITHEAPPHHELQEERVMSLRGTDRSEPTEGSNLLTSGEKKPQDSPTEPNGLQSLRRFLACPPRGCLARVITNGTMVVLLWAMVWSVTGPECLPGGNLFGIIILFYCSITGGKLFGLIKFPTLPPLPPLLGMLLAGFLLRNIPVINDSVRIQHKWSSSLRSIALSVILVRAGLGLDSKALRKLKGVCVRLAMGPCIVEACASAILSHFLMGLPWQWGFILGFVVGAVSPAVVVPSMLLLQEGGYGVGKGIPTLLMAAGSFDDILAITGFNTCLGVAFSTGSTVFNIFRGILEVVIGVAAGSFLGFFIQYFPSRDQDNLVWKRAFLVLGFAVLAVFSSVYFSFPGSGGLCTLVMAFLAGMRWTDKKSEVEKVIAVTWDVFQPLLFGLIGAEVSIVSLRAETVGLCVATLSIAVLIRILTTFLMVCFAGFNIKEKIFISFAWLPKATVQAAIGSVALDTARSHGEKQLEDYGMDVLTVAFLAILITAPIGSLLIGLLGPRVLQKSEHRTEEEVQGETSAHIQRKPEDSITEA.

The tract at residues 1 to 68 is disordered; sequence MEDEDKTAEC…PQDSPTEPNG (68 aa). At 1–86 the chain is on the cytoplasmic side; sequence MEDEDKTAEC…ACPPRGCLAR (86 aa). Positions 23–45 are enriched in basic and acidic residues; sequence APPHHELQEERVMSLRGTDRSEP. Position 49 is a phosphoserine (Ser49). The chain crosses the membrane as a helical span at residues 87–104; the sequence is VITNGTMVVLLWAMVWSV. Residues 105 to 113 are Extracellular-facing; it reads TGPECLPGG. Residues 114 to 133 traverse the membrane as a helical segment; that stretch reads NLFGIIILFYCSITGGKLFG. Over 134 to 144 the chain is Cytoplasmic; the sequence is LIKFPTLPPLP. Residues 145–161 form a helical membrane-spanning segment; that stretch reads PLLGMLLAGFLLRNIPV. Topologically, residues 162 to 171 are extracellular; sequence INDSVRIQHK. A helical membrane pass occupies residues 172 to 189; that stretch reads WSSSLRSIALSVILVRAG. The Cytoplasmic portion of the chain corresponds to 190-200; that stretch reads LGLDSKALRKL. A helical transmembrane segment spans residues 201–227; it reads KGVCVRLAMGPCIVEACASAILSHFLM. Over 228-233 the chain is Extracellular; it reads GLPWQW. Residues 234 to 242 traverse the membrane as a helical segment; that stretch reads GFILGFVVG. Residues 243–270 are Cytoplasmic-facing; sequence AVSPAVVVPSMLLLQEGGYGVGKGIPTL. Val244, Gly275, Asp278, and Asp279 together coordinate Na(+). A helical transmembrane segment spans residues 271–290; sequence LMAAGSFDDILAITGFNTCL. The Extracellular segment spans residues 291 to 300; the sequence is GVAFSTGSTV. A helical transmembrane segment spans residues 301–324; that stretch reads FNIFRGILEVVIGVAAGSFLGFFI. Residues 325–339 are Cytoplasmic-facing; sequence QYFPSRDQDNLVWKR. The chain crosses the membrane as a helical span at residues 340 to 357; the sequence is AFLVLGFAVLAVFSSVYF. Residues 358–361 lie on the Extracellular side of the membrane; sequence SFPG. A helical membrane pass occupies residues 362 to 373; sequence SGGLCTLVMAFL. The Cytoplasmic segment spans residues 374–390; sequence AGMRWTDKKSEVEKVIA. A helical membrane pass occupies residues 391–411; that stretch reads VTWDVFQPLLFGLIGAEVSIV. Residues 412–417 are Extracellular-facing; it reads SLRAET. Residues 418-440 form a helical membrane-spanning segment; it reads VGLCVATLSIAVLIRILTTFLMV. The Cytoplasmic segment spans residues 441–461; that stretch reads CFAGFNIKEKIFISFAWLPKA. A helical membrane pass occupies residues 462-473; the sequence is TVQAAIGSVALD. Residues 474–486 lie on the Extracellular side of the membrane; that stretch reads TARSHGEKQLEDY. A helical membrane pass occupies residues 487–509; it reads GMDVLTVAFLAILITAPIGSLLI. At 510-547 the chain is on the cytoplasmic side; sequence GLLGPRVLQKSEHRTEEEVQGETSAHIQRKPEDSITEA. A disordered region spans residues 522-547; sequence HRTEEEVQGETSAHIQRKPEDSITEA. The segment covering 538–547 has biased composition (basic and acidic residues); that stretch reads RKPEDSITEA.

Belongs to the monovalent cation:proton antiporter 1 (CPA1) transporter (TC 2.A.36) family. Homodimer; dimerization is essential for SLC9B2 activity. Lipids seem to play a role in the stabilization of the dimerization subdomain. In terms of tissue distribution, widely expressed. However expression seems to be restricted to specific cell types within individual organs, e.g. osteoclasts in the bone, distal tubules of the kidney or beta-cells of Langerhans islets. In sperm specifically present in the principal piece of sperm tail (at protein level).

The protein localises to the cell membrane. It is found in the mitochondrion membrane. It localises to the endosome membrane. The protein resides in the lysosome membrane. Its subcellular location is the recycling endosome membrane. The protein localises to the cytoplasmic vesicle. It is found in the secretory vesicle. It localises to the synaptic vesicle membrane. The protein resides in the cell projection. Its subcellular location is the cilium. The protein localises to the flagellum membrane. It is found in the basolateral cell membrane. It localises to the apical cell membrane. The enzyme catalyses Na(+)(in) + H(+)(out) = Na(+)(out) + H(+)(in). The catalysed reaction is Li(+)(out) + H(+)(in) = Li(+)(in) + H(+)(out). It carries out the reaction Li(+)(in) + Na(+)(out) = Li(+)(out) + Na(+)(in). Allosterically inhibited by the N-terminal domain. Inhibited by phloretin. Electroneutral Na(+) Li(+)/H(+) antiporter that extrudes Na(+) or Li(+) in exchange for external protons across the membrane. Uses the proton gradient/membrane potential to extrude sodium. Contributes to the regulation of intracellular pH and sodium homeostasis. Also able to mediate Na(+)/Li(+) antiporter activity in kidney. May play a physiological role in renal tubular function and blood pressure homeostasis. Plays an important role for insulin secretion and clathrin-mediated endocytosis in beta-cells. Involved in sperm motility and fertility. It is controversial whether SLC9B2 plays a role in osteoclast differentiation or not. This is Sodium/hydrogen exchanger 9B2 from Mus musculus (Mouse).